A 172-amino-acid chain; its full sequence is Adenine phosphoribosyltransferase (172 aa).

Belongs to the purine/pyrimidine phosphoribosyltransferase family. As to quaternary structure, homodimer.

The protein resides in the cytoplasm. The catalysed reaction is AMP + diphosphate = 5-phospho-alpha-D-ribose 1-diphosphate + adenine. It participates in purine metabolism; AMP biosynthesis via salvage pathway; AMP from adenine: step 1/1. Catalyzes a salvage reaction resulting in the formation of AMP, that is energically less costly than de novo synthesis. The protein is Adenine phosphoribosyltransferase of Exiguobacterium sibiricum (strain DSM 17290 / CCUG 55495 / CIP 109462 / JCM 13490 / 255-15).